Reading from the N-terminus, the 305-residue chain is UDP-3-O-acyl-N-acetylglucosamine deacetylase (305 aa).

Zn(2+)-binding residues include H78, H235, and D239. Residue H262 is the Proton donor of the active site.

This sequence belongs to the LpxC family. Zn(2+) is required as a cofactor.

It catalyses the reaction a UDP-3-O-[(3R)-3-hydroxyacyl]-N-acetyl-alpha-D-glucosamine + H2O = a UDP-3-O-[(3R)-3-hydroxyacyl]-alpha-D-glucosamine + acetate. It functions in the pathway glycolipid biosynthesis; lipid IV(A) biosynthesis; lipid IV(A) from (3R)-3-hydroxytetradecanoyl-[acyl-carrier-protein] and UDP-N-acetyl-alpha-D-glucosamine: step 2/6. Its function is as follows. Catalyzes the hydrolysis of UDP-3-O-myristoyl-N-acetylglucosamine to form UDP-3-O-myristoylglucosamine and acetate, the committed step in lipid A biosynthesis. This Citrifermentans bemidjiense (strain ATCC BAA-1014 / DSM 16622 / JCM 12645 / Bem) (Geobacter bemidjiensis) protein is UDP-3-O-acyl-N-acetylglucosamine deacetylase.